Reading from the N-terminus, the 203-residue chain is Proteasome subunit beta 2 (203 aa).

Positions 1-10 (MNLQNKILKG) are cleaved as a propeptide — removed in mature form; by autocatalysis. The active-site Nucleophile is threonine 11.

This sequence belongs to the peptidase T1B family. As to quaternary structure, the 20S proteasome core is composed of 14 alpha and 14 beta subunits that assemble into four stacked heptameric rings, resulting in a barrel-shaped structure. The two inner rings, each composed of seven catalytic beta subunits, are sandwiched by two outer rings, each composed of seven alpha subunits. The catalytic chamber with the active sites is on the inside of the barrel. Has a gated structure, the ends of the cylinder being occluded by the N-termini of the alpha-subunits. Is capped at one or both ends by the proteasome regulatory ATPase, PAN.

The protein resides in the cytoplasm. The catalysed reaction is Cleavage of peptide bonds with very broad specificity.. The formation of the proteasomal ATPase PAN-20S proteasome complex, via the docking of the C-termini of PAN into the intersubunit pockets in the alpha-rings, triggers opening of the gate for substrate entry. Interconversion between the open-gate and close-gate conformations leads to a dynamic regulation of the 20S proteasome proteolysis activity. In terms of biological role, component of the proteasome core, a large protease complex with broad specificity involved in protein degradation. In Sulfolobus acidocaldarius (strain ATCC 33909 / DSM 639 / JCM 8929 / NBRC 15157 / NCIMB 11770), this protein is Proteasome subunit beta 2.